We begin with the raw amino-acid sequence, 310 residues long: Olfactory receptor 5W2 (310 aa).

At Met1–Val25 the chain is on the extracellular side. N-linked (GlcNAc...) asparagine glycosylation occurs at Asn5. A helical transmembrane segment spans residues Thr26–Ile46. At Val47 to Gln54 the chain is on the cytoplasmic side. Residues Leu55–Thr75 form a helical membrane-spanning segment. The Extracellular portion of the chain corresponds to Ala76 to Leu99. A helical membrane pass occupies residues Gln100 to Phe120. Residues Asp121–Arg139 are Cytoplasmic-facing. The chain crosses the membrane as a helical span at residues Val140 to Met160. Residues Thr161–Glu196 lie on the Extracellular side of the membrane. Residues Leu197 to Ser217 form a helical membrane-spanning segment. The Cytoplasmic portion of the chain corresponds to Tyr218–Ala237. The chain crosses the membrane as a helical span at residues Leu238–Met258. The Extracellular segment spans residues Tyr259–Asp271. The chain crosses the membrane as a helical span at residues Lys272–Leu292. The Cytoplasmic segment spans residues Arg293–Phe310.

It belongs to the G-protein coupled receptor 1 family.

It localises to the cell membrane. Its function is as follows. Odorant receptor. This chain is Olfactory receptor 5W2 (OR5W2), found in Homo sapiens (Human).